A 523-amino-acid chain; its full sequence is Ribonuclease Y (523 aa).

A helical membrane pass occupies residues 7–24 (LSSLASALLAGGGTYLVY). Residues 213-279 (LINVVNLPND…TRTIEALVED (67 aa)) form the KH domain. An HD domain is found at 339-432 (ALGHSLEVAN…VCAADALSAA (94 aa)).

Belongs to the RNase Y family.

The protein localises to the cell membrane. Functionally, endoribonuclease that initiates mRNA decay. This Wolinella succinogenes (strain ATCC 29543 / DSM 1740 / CCUG 13145 / JCM 31913 / LMG 7466 / NCTC 11488 / FDC 602W) (Vibrio succinogenes) protein is Ribonuclease Y.